The sequence spans 195 residues: Coiled-coil domain-containing protein 184 (195 aa).

Residues 39–68 (GMKELMEHLKAQLQALFEDVRAMRGALDEQ) adopt a coiled-coil conformation. The interval 98 to 175 (RQGGLGVVGN…AGLLGGDGPL (78 aa)) is disordered. A compositionally biased stretch (acidic residues) spans 135–146 (PEDEEDDDEEEK).

The polypeptide is Coiled-coil domain-containing protein 184 (CCDC184) (Bos taurus (Bovine)).